The following is a 184-amino-acid chain: Threonylcarbamoyl-AMP synthase (184 aa).

Positions 3-184 (AWFIQKAVSV…DAATGAILRQ (182 aa)) constitute a YrdC-like domain.

It belongs to the SUA5 family. TsaC subfamily.

The protein localises to the cytoplasm. The enzyme catalyses L-threonine + hydrogencarbonate + ATP = L-threonylcarbamoyladenylate + diphosphate + H2O. Required for the formation of a threonylcarbamoyl group on adenosine at position 37 (t(6)A37) in tRNAs that read codons beginning with adenine. Catalyzes the conversion of L-threonine, HCO(3)(-)/CO(2) and ATP to give threonylcarbamoyl-AMP (TC-AMP) as the acyladenylate intermediate, with the release of diphosphate. This chain is Threonylcarbamoyl-AMP synthase, found in Hahella chejuensis (strain KCTC 2396).